We begin with the raw amino-acid sequence, 848 residues long: DNA mismatch repair protein MutS (848 aa).

605 to 612 (GPNMAGKS) provides a ligand contact to ATP.

This sequence belongs to the DNA mismatch repair MutS family.

Its function is as follows. This protein is involved in the repair of mismatches in DNA. It is possible that it carries out the mismatch recognition step. This protein has a weak ATPase activity. This Leptospira borgpetersenii serovar Hardjo-bovis (strain JB197) protein is DNA mismatch repair protein MutS.